We begin with the raw amino-acid sequence, 1035 residues long: MPPPPHIKPENVLKRAQELIAVGQAPAALTVLHEHATSKRTRSSPIASLEPVMLLFVELCVDLRKGKAAKDGLYQYKNIAQNSNVGTIEIVLKKFIELAEKKVTEAQAKADEIQSSLESAAPSSNVEDLEAIETPETILLATVSGEQSRDRTDRAVVTPWLKFLWETYRTVLEILKNNARLEIMYQTTALQAFQFCLKYTRKTEFRRLCELLRNHVQNAAKYSAQMHAINLSDPDTLQRHLDTRFQQLNVAVELELWQEAFRSIEDIHTLLSLSKRPAKNVMMANYYEKLARIFLVSENYLFHAAAWSRYYNLLRQSAVTLSTNQGSKKDHPSVTEADMTKAASFVLLSALAIPVISTSRSRGALIDVDEVRKNKNTRLTNLLGMLQSPTRAVLFRDALNKGLLKRVRPEIRELYNILEVDFHPLSICKKVTPILKKIGDDPEMEKYVVPLQQVILTRLFQQLSQVYESVELKFVYELAQFPDPFQITPSMIEKFIMNGCKKGDLAIRVDHISGVLTFDTDVFSSAKALHSGSAAGSAESELGSVQRLQNTPAEIARLQLTRLAKTLHVTCMYVDPSYNDSRLQAKQAALTRAAAGAAKEHEDTLERRVIIEKKKEAATDALQRKQKEEETRKRIRTQQLQEAEKQRLAEEQRERELKRIKDEQDRIRQQELKKQLEELKSGVKGIDLNEIDLEDLDANRLRAIKLAQLEKEKNELTERVRATGKRIDHLERAFRREELKHIAEDYEAQKKVDMEIYERQKAQTLAEAEAKHKEAVALKHRLSRLIPVFSSFRKEVSEKRHEEFEKRRKAAEREFEAKKKQRVKEVQERRRREKIERENAERAKREEEERIKREEEERAARDAERRRILAEEKAKREEERAKMDEIAAKQRQREEEAEARLRAKRAGLSEPPRTESEVRTAPRLNIAPRTSGGPSWRERQAAKEAAGGAAPEAPKAEPEPPRRTGGYVPPHARGGSDAAPPAGNRYVPPSQRSSQPPSRTQTPPTSSPKPEEPKPLASGTGGKWVPRWKQQQQNQ.

Residues 92–121 (LKKFIELAEKKVTEAQAKADEIQSSLESAA) are a coiled coil. Positions 339–523 (MTKAASFVLL…GVLTFDTDVF (185 aa)) constitute a PCI domain. A coiled-coil region spans residues 606-910 (ERRVIIEKKK…LRAKRAGLSE (305 aa)). 2 stretches are compositionally biased toward basic and acidic residues: residues 619-632 (TDALQRKQKEEETR) and 809-901 (KAAE…EARL). Disordered regions lie at residues 619–649 (TDALQRKQKEEETRKRIRTQQLQEAEKQRLA) and 809–1035 (KAAE…QQNQ). 2 stretches are compositionally biased toward low complexity: residues 943–953 (KEAAGGAAPEA) and 988–1004 (PPSQRSSQPPSRTQTPP).

This sequence belongs to the eIF-3 subunit A family. Component of the eukaryotic translation initiation factor 3 (eIF-3) complex.

The protein localises to the cytoplasm. RNA-binding component of the eukaryotic translation initiation factor 3 (eIF-3) complex, which is involved in protein synthesis of a specialized repertoire of mRNAs and, together with other initiation factors, stimulates binding of mRNA and methionyl-tRNAi to the 40S ribosome. The eIF-3 complex specifically targets and initiates translation of a subset of mRNAs involved in cell proliferation. The sequence is that of Eukaryotic translation initiation factor 3 subunit A (tif32) from Emericella nidulans (strain FGSC A4 / ATCC 38163 / CBS 112.46 / NRRL 194 / M139) (Aspergillus nidulans).